The sequence spans 866 residues: Paramyosin (866 aa).

Residues 1 to 22 (MMNHDTESHVKISRTIYRGVSP) form a nonhelical region region. Positions 23–839 (STTRLESRVR…AERTVTVRRV (817 aa)) form a coiled coil. Residues 840 to 866 (GPGGRAVSVARELSVTSNRGMRATSMM) form a nonhelical region region.

The protein belongs to the paramyosin family. In terms of assembly, homodimer.

The protein localises to the cytoplasm. It localises to the myofibril. Paramyosin is a major structural component of many thick filaments isolated from invertebrate muscles. The sequence is that of Paramyosin from Schistosoma japonicum (Blood fluke).